The primary structure comprises 68 residues: Sec-independent protein translocase protein TatA (68 aa).

A helical transmembrane segment spans residues 1 to 21 (MGSFSIWHWLIVLAVVLLLFG). The interval 48 to 68 (AAAADKSIDGKTVDHKSDEVR) is disordered. Positions 53-68 (KSIDGKTVDHKSDEVR) are enriched in basic and acidic residues.

Belongs to the TatA/E family. In terms of assembly, the Tat system comprises two distinct complexes: a TatABC complex, containing multiple copies of TatA, TatB and TatC subunits, and a separate TatA complex, containing only TatA subunits. Substrates initially bind to the TatABC complex, which probably triggers association of the separate TatA complex to form the active translocon.

The protein localises to the cell inner membrane. Part of the twin-arginine translocation (Tat) system that transports large folded proteins containing a characteristic twin-arginine motif in their signal peptide across membranes. TatA could form the protein-conducting channel of the Tat system. The polypeptide is Sec-independent protein translocase protein TatA (Sinorhizobium medicae (strain WSM419) (Ensifer medicae)).